We begin with the raw amino-acid sequence, 193 residues long: MIQAILVFNNHGKPRLVRFYQRFPEEIQQQIVRETFHLVLKRDDNICNFLEGGSLIGGSDYKLIYRHYATLYFVFCVDSSESELGILDLIQVFVETLDKCFENVCELDLIFHMDKVHYILQEVVMGGMVLETNMNEIVAQIEAQNRLEKSEGGLSAAPARAVSAVKNINLPEIPRNINIGDLNIKVPNLSQFV.

The protein belongs to the adaptor complexes small subunit family. As to quaternary structure, adaptor protein complex 3 (AP-3) is a heterotetramer composed of two large adaptins (delta-type subunit AP3D1 and beta-type subunit AP3B1 or AP3B2), a medium adaptin (mu-type subunit AP3M1 or AP3M2) and a small adaptin (sigma-type subunit APS1 or AP3S2). Interacts with AGAP1. AP-3 associates with the BLOC-1 complex. In terms of tissue distribution, present in all adult tissues examined.

It localises to the golgi apparatus. The protein resides in the cytoplasmic vesicle membrane. Part of the AP-3 complex, an adaptor-related complex which is not clathrin-associated. The complex is associated with the Golgi region as well as more peripheral structures. It facilitates the budding of vesicles from the Golgi membrane and may be directly involved in trafficking to lysosomes. In concert with the BLOC-1 complex, AP-3 is required to target cargos into vesicles assembled at cell bodies for delivery into neurites and nerve terminals. The chain is AP-3 complex subunit sigma-2 (AP3S2) from Homo sapiens (Human).